Consider the following 124-residue polypeptide: Fluoride-specific ion channel FluC (124 aa).

The next 4 membrane-spanning stretches (helical) occupy residues 4-24 (VLFV…ISLL), 35-55 (FGTL…FALG), 62-82 (PEIK…FSTF), and 95-115 (LVKA…VVYL). Positions 74 and 77 each coordinate Na(+).

This sequence belongs to the fluoride channel Fluc/FEX (TC 1.A.43) family.

The protein localises to the cell inner membrane. The enzyme catalyses fluoride(in) = fluoride(out). With respect to regulation, na(+) is not transported, but it plays an essential structural role and its presence is essential for fluoride channel function. Fluoride-specific ion channel. Important for reducing fluoride concentration in the cell, thus reducing its toxicity. This Shewanella halifaxensis (strain HAW-EB4) protein is Fluoride-specific ion channel FluC.